A 110-amino-acid chain; its full sequence is UPF0145 protein Blon_0093/BLIJ_0092 (110 aa).

This sequence belongs to the UPF0145 family.

This Bifidobacterium longum subsp. infantis (strain ATCC 15697 / DSM 20088 / JCM 1222 / NCTC 11817 / S12) protein is UPF0145 protein Blon_0093/BLIJ_0092.